The chain runs to 286 residues: Mycolic acid methyltransferase MmaA1 (286 aa).

Residues 32-33, 71-73, 93-98, and 122-123 contribute to the S-adenosyl-L-methionine site; these read YT, GCG, TLSRNH, and WE. Cys268 is an active-site residue.

Belongs to the CFA/CMAS family.

The protein operates within lipid metabolism; mycolic acid biosynthesis. Involved in the conversion of a cis-olefin into a trans-olefin with concomitant introduction of an allylic methyl branch at the proximal position of the precursor to both the methoxy and ketomycolic acids. It directly affects the cis- to trans ratio and indirectly affects the keto to methoxy ratio. The polypeptide is Mycolic acid methyltransferase MmaA1 (cmaD) (Mycobacterium bovis (strain ATCC BAA-935 / AF2122/97)).